We begin with the raw amino-acid sequence, 606 residues long: (R)-limonene synthase 1, chloroplastic (606 aa).

A chloroplast-targeting transit peptide spans 1–32 (MSSCINPSTLVTSVNAFKCLPLATNKAAIRIM). Mn(2+) is bound by residues D342 and D346. The substrate site is built by D342, D346, R484, D487, and K503. A DDXXD motif motif is present at residues 342–346 (DDIYD). Residue D487 participates in Mn(2+) binding.

It belongs to the terpene synthase family. Mg(2+) is required as a cofactor. Requires Mn(2+) as cofactor.

It localises to the plastid. Its subcellular location is the chloroplast. It carries out the reaction (2E)-geranyl diphosphate = (4R)-limonene + diphosphate. The polypeptide is (R)-limonene synthase 1, chloroplastic (Citrus limon (Lemon)).